The sequence spans 149 residues: Protegrin-3 (149 aa).

The signal sequence occupies residues 1 to 29 (METQRASLCLGRWSLWLLLLALVVPSASA). A propeptide spanning residues 30-130 (QALSYREAVL…DITCNEVQGV (101 aa)) is cleaved from the precursor. The tract at residues 61–80 (DQPPKADEDPGTPKPVSFTV) is disordered. Intrachain disulfides connect Cys85/Cys96, Cys107/Cys124, Cys136/Cys145, and Cys138/Cys143. At Arg148 the chain carries Arginine amide.

Belongs to the cathelicidin family.

It is found in the secreted. Functionally, microbicidal activity. Active against E.coli, Listeria monocytogenes and C.albicans, in vitro. This chain is Protegrin-3 (NPG3), found in Sus scrofa (Pig).